We begin with the raw amino-acid sequence, 249 residues long: Molybdate/tungstate transport system permease protein WtpB (249 aa).

Residues 1–5 (MEKFD) are Cytoplasmic-facing. Residues 6-26 (IAMTVFLVMIFLFIFLPIIYM) traverse the membrane as a helical segment. The Extracellular segment spans residues 27–48 (LSNPGDLNQLLDKEVIEAFKTT). The ABC transmembrane type-1 domain maps to 45 to 240 (FKTTLLAGAV…LISIALFALL (196 aa)). Residues 49-69 (LLAGAVATLIALIFGIPTGYI) traverse the membrane as a helical segment. Over 70 to 93 (LARYDFKFKSFVEAVLDLPMAIPH) the chain is Cytoplasmic. The helical transmembrane segment at 94–114 (SVIGIIILSFIYGIDIINFIG) threads the bilayer. At 115–116 (RY) the chain is on the extracellular side. The chain crosses the membrane as a helical span at residues 117 to 137 (VVDNFWGIVTVYLFVGIPFMV). Residues 138 to 177 (NSIRDGFLSVDEEIEYVSRTLGASKIRTFFEISLPLIKNN) are Cytoplasmic-facing. Residues 178-198 (IISGIILSFARGISEVGAILI) form a helical membrane-spanning segment. Topologically, residues 199–223 (IAYYPKTVPILIYERFMSFGLDASK) are extracellular. A helical transmembrane segment spans residues 224–244 (PISVGMILISIALFALLRMFG). Residues 245–249 (RMRGR) lie on the Cytoplasmic side of the membrane.

The protein belongs to the binding-protein-dependent transport system permease family. In terms of assembly, the complex is composed of two ATP-binding proteins (WtpC), two transmembrane proteins (WtpB) and a solute-binding protein (WtpA).

The protein localises to the cell membrane. Part of the ABC transporter complex WtpABC involved in molybdate/tungstate import. Probably responsible for the translocation of the substrate across the membrane. The polypeptide is Molybdate/tungstate transport system permease protein WtpB (wtpB) (Methanocaldococcus jannaschii (strain ATCC 43067 / DSM 2661 / JAL-1 / JCM 10045 / NBRC 100440) (Methanococcus jannaschii)).